Here is an 82-residue protein sequence, read N- to C-terminus: Large ribosomal subunit protein uL23 (82 aa).

Belongs to the universal ribosomal protein uL23 family. In terms of assembly, part of the 50S ribosomal subunit. Contacts protein L29.

Its function is as follows. Binds to 23S rRNA. One of the proteins that surrounds the polypeptide exit tunnel on the outside of the ribosome. This chain is Large ribosomal subunit protein uL23, found in Sulfolobus acidocaldarius (strain ATCC 33909 / DSM 639 / JCM 8929 / NBRC 15157 / NCIMB 11770).